A 260-amino-acid polypeptide reads, in one-letter code: 3'-5' ssDNA/RNA exonuclease TatD (260 aa).

A divalent metal cation contacts are provided by Glu91, His127, and His152.

Belongs to the metallo-dependent hydrolases superfamily. TatD-type hydrolase family. TatD subfamily. Monomer. Requires Mg(2+) as cofactor.

The protein localises to the cytoplasm. Its function is as follows. 3'-5' exonuclease that prefers single-stranded DNA and RNA. May play a role in the H(2)O(2)-induced DNA damage repair. The sequence is that of 3'-5' ssDNA/RNA exonuclease TatD from Enterobacter sp. (strain 638).